The sequence spans 361 residues: Chorismate synthase (361 aa).

Arginine 48 contributes to the NADP(+) binding site. Residues 125–127 (RSS), 238–239 (NA), glycine 278, 293–297 (KPTSS), and arginine 319 each bind FMN.

This sequence belongs to the chorismate synthase family. In terms of assembly, homotetramer. FMNH2 serves as cofactor.

It catalyses the reaction 5-O-(1-carboxyvinyl)-3-phosphoshikimate = chorismate + phosphate. It participates in metabolic intermediate biosynthesis; chorismate biosynthesis; chorismate from D-erythrose 4-phosphate and phosphoenolpyruvate: step 7/7. Functionally, catalyzes the anti-1,4-elimination of the C-3 phosphate and the C-6 proR hydrogen from 5-enolpyruvylshikimate-3-phosphate (EPSP) to yield chorismate, which is the branch point compound that serves as the starting substrate for the three terminal pathways of aromatic amino acid biosynthesis. This reaction introduces a second double bond into the aromatic ring system. This Aliivibrio fischeri (strain MJ11) (Vibrio fischeri) protein is Chorismate synthase.